Consider the following 84-residue polypeptide: Toxin Ts4 (84 aa).

Residues 1-19 (MKRMILFISCLLLIDIVVG) form the signal peptide. In terms of domain architecture, LCN-type CS-alpha/beta spans 21–82 (REGYPADSKG…IWTSETNKCG (62 aa)). 4 disulfides stabilise this stretch: Cys31/Cys81, Cys35/Cys57, Cys43/Cys62, and Cys47/Cys64. Cys81 carries the post-translational modification Cysteine amide. Residues 82-84 (GKK) constitute a propeptide that is removed on maturation.

Belongs to the long (4 C-C) scorpion toxin superfamily. Sodium channel inhibitor family. Alpha subfamily. In terms of tissue distribution, expressed by the venom gland.

It is found in the secreted. Its function is as follows. Not toxic. Induces an immune response similar to that induced by whole venom. Induces a dose dependent release of the neurotransmitters glutamic acid and gamma aminobutyric acid from rat brain synaptosomes. Thus, polyclonal antibodies raised against this protein can neutralize the effects of the venom. The protein is Toxin Ts4 of Tityus serrulatus (Brazilian scorpion).